Consider the following 135-residue polypeptide: Class I hydrophobin dewA (135 aa).

A signal peptide spans 1 to 18 (MRFIVSLLAFTAAATATA). 4 disulfides stabilise this stretch: C44–C114, C51–C108, C52–C84, and C115–C122. An N-linked (GlcNAc...) asparagine glycan is attached at N60.

It belongs to the fungal hydrophobin family. In terms of assembly, forms homodimers at high concentrations, and these dimers are off-pathway to rodlet formation. Dissociation of the dimers into monomers, with resultant exposure of the hydrophobic face, is necessary for self-assembly to form functional amyloid fibrils called rodlets. Self-assembly into fibrillar rodlets occurs spontaneously at hydrophobic:hydrophilic interfaces and the rodlets further associate laterally to form amphipathic monolayers.

The protein localises to the secreted. It is found in the spore wall. Aerial growth, conidiation, and dispersal of filamentous fungi in the environment rely upon a capability of their secreting small amphipathic proteins called hydrophobins (HPBs) with low sequence identity. Class I can self-assemble into an outermost layer of rodlet bundles on aerial cell surfaces, conferring cellular hydrophobicity that supports fungal growth, development and dispersal; whereas Class II form highly ordered films at water-air interfaces through intermolecular interactions but contribute nothing to the rodlet structure. DewA is a class I hydrophobin that contributes to spore wall hydrophobicity. This is Class I hydrophobin dewA from Emericella nidulans (strain FGSC A4 / ATCC 38163 / CBS 112.46 / NRRL 194 / M139) (Aspergillus nidulans).